A 357-amino-acid chain; its full sequence is Trans-resveratrol di-O-methyltransferase (357 aa).

Residues glycine 200, aspartate 223, aspartate 243, methionine 244, and lysine 257 each contribute to the S-adenosyl-L-methionine site. Residue histidine 261 is the Proton acceptor of the active site.

Belongs to the class I-like SAM-binding methyltransferase superfamily. Cation-independent O-methyltransferase family. COMT subfamily.

It carries out the reaction trans-resveratrol + 2 S-adenosyl-L-methionine = pterostilbene + 2 S-adenosyl-L-homocysteine + 2 H(+). In terms of biological role, catalyzes the biosynthesis of pterostilbene from resveratrol. Pterostilbene has both antifungal and pharmacological properties. Also has activity toward resveratrol monomethyl ether (RME). The sequence is that of Trans-resveratrol di-O-methyltransferase (ROMT) from Vitis vinifera (Grape).